We begin with the raw amino-acid sequence, 263 residues long: RNA exonuclease 4 (263 aa).

A disordered region spans residues 1 to 27 (MRLSSNWSKLQDGVTKKAGKKRIDKKP). Basic residues predominate over residues 17–27 (KAGKKRIDKKP). The Exonuclease domain maps to 95–247 (YIAMDCEFVG…EDARATMLIY (153 aa)).

This sequence belongs to the REXO4 family.

The protein resides in the nucleus. Its function is as follows. Exoribonuclease involved in ribosome biosynthesis. Involved in the processing of ITS1, the internal transcribed spacer localized between the 18S and 5.8S rRNAs. This chain is RNA exonuclease 4 (REX4), found in Candida glabrata (strain ATCC 2001 / BCRC 20586 / JCM 3761 / NBRC 0622 / NRRL Y-65 / CBS 138) (Yeast).